Reading from the N-terminus, the 372-residue chain is Glutamate 5-kinase (372 aa).

Position 14 (Lys14) interacts with ATP. The substrate site is built by Ser54, Asp141, and Asn153. Position 173 to 174 (173 to 174 (TD)) interacts with ATP. In terms of domain architecture, PUA spans 280-358 (RGTLVLDAGA…DAIESILGYS (79 aa)).

It belongs to the glutamate 5-kinase family.

It localises to the cytoplasm. The catalysed reaction is L-glutamate + ATP = L-glutamyl 5-phosphate + ADP. Its pathway is amino-acid biosynthesis; L-proline biosynthesis; L-glutamate 5-semialdehyde from L-glutamate: step 1/2. Functionally, catalyzes the transfer of a phosphate group to glutamate to form L-glutamate 5-phosphate. In Pseudomonas putida (strain GB-1), this protein is Glutamate 5-kinase.